A 63-amino-acid polypeptide reads, in one-letter code: Prokaryotic ubiquitin-like protein Pup (63 aa).

The tract at residues 1 to 28 (MPQEFEQIRSADQPLDSEESAPVAGART) is disordered. The tract at residues 19 to 57 (ESAPVAGARTDDTVDALDAVLDDIESVLETNAEEYVGSF) is ARC ATPase binding. Residue Glu-63 forms an Isoglutamyl lysine isopeptide (Glu-Lys) (interchain with K-? in acceptor proteins) linkage.

The protein belongs to the prokaryotic ubiquitin-like protein family. Strongly interacts with the proteasome-associated ATPase ARC through a hydrophobic interface; the interacting region of Pup lies in its C-terminal half. There is one Pup binding site per ARC hexamer ring.

It functions in the pathway protein degradation; proteasomal Pup-dependent pathway. In terms of biological role, protein modifier that is covalently attached to lysine residues of substrate proteins, thereby targeting them for proteasomal degradation. The tagging system is termed pupylation. The polypeptide is Prokaryotic ubiquitin-like protein Pup (Bifidobacterium dentium (strain ATCC 27534 / DSM 20436 / JCM 1195 / Bd1)).